The chain runs to 306 residues: Tyrosine recombinase XerC (306 aa).

In terms of domain architecture, Core-binding (CB) spans 6-92 (NTLYLQTKPY…ALRQWFSYLI (87 aa)). The 180-residue stretch at 113–292 (RLPKNIDAEQ…DFQHLAKIYD (180 aa)) folds into the Tyr recombinase domain. Catalysis depends on residues arginine 152, lysine 176, histidine 244, arginine 247, and histidine 270. Tyrosine 279 acts as the O-(3'-phospho-DNA)-tyrosine intermediate in catalysis.

This sequence belongs to the 'phage' integrase family. XerC subfamily. Forms a cyclic heterotetrameric complex composed of two molecules of XerC and two molecules of XerD.

Its subcellular location is the cytoplasm. Functionally, site-specific tyrosine recombinase, which acts by catalyzing the cutting and rejoining of the recombining DNA molecules. The XerC-XerD complex is essential to convert dimers of the bacterial chromosome into monomers to permit their segregation at cell division. It also contributes to the segregational stability of plasmids. The sequence is that of Tyrosine recombinase XerC from Actinobacillus pleuropneumoniae serotype 7 (strain AP76).